The following is a 697-amino-acid chain: Serine/threonine-protein kinase tousled-like 2 (697 aa).

2 disordered regions span residues 25–159 (VAKG…SQSE) and 288–316 (KLLI…SKSN). The segment covering 31–44 (HNESSNQSLCSVGS) has biased composition (polar residues). Basic and acidic residues predominate over residues 46–61 (SDKELETPEKKSNDQR). A compositionally biased stretch (polar residues) spans 109–145 (SSPQHSLSNPPAAVQQGSPSSISSVNTDHSHTSTSHK). Coiled coils occupy residues 265–294 (AFQN…IKKK) and 336–373 (KLRL…IHNE). The Protein kinase domain maps to 388 to 666 (YLLLHLLGRG…VHQLASDPYL (279 aa)). Residues 394-402 (LGRGGFSEV) and Lys-417 each bind ATP. Asp-518 functions as the Proton acceptor in the catalytic mechanism.

This sequence belongs to the protein kinase superfamily. Ser/Thr protein kinase family. In terms of assembly, monomer. May form homodimers; homodimerization may enhance autophosphoylation and enzymatic activity. Heterodimer with TLK1. The cofactor is Mg(2+). Post-translationally, phosphorylated. Autophosphorylated; phosphorylation promotes the assembly of higher order oligomers and enzymatic activity.

Its subcellular location is the nucleus. It is found in the nucleoplasm. The protein localises to the cytoplasm. It localises to the perinuclear region. The protein resides in the cytoskeleton. It carries out the reaction L-seryl-[protein] + ATP = O-phospho-L-seryl-[protein] + ADP + H(+). The enzyme catalyses L-threonyl-[protein] + ATP = O-phospho-L-threonyl-[protein] + ADP + H(+). Serine/threonine-protein kinase involved in the process of chromatin assembly and probably also DNA replication, transcription, repair, and chromosome segregation. Negative regulator of amino acid starvation-induced autophagy. This is Serine/threonine-protein kinase tousled-like 2 from Danio rerio (Zebrafish).